The sequence spans 186 residues: Elongation factor P (186 aa).

It belongs to the elongation factor P family.

The protein resides in the cytoplasm. It participates in protein biosynthesis; polypeptide chain elongation. In terms of biological role, involved in peptide bond synthesis. Stimulates efficient translation and peptide-bond synthesis on native or reconstituted 70S ribosomes in vitro. Probably functions indirectly by altering the affinity of the ribosome for aminoacyl-tRNA, thus increasing their reactivity as acceptors for peptidyl transferase. The sequence is that of Elongation factor P from Cupriavidus metallidurans (strain ATCC 43123 / DSM 2839 / NBRC 102507 / CH34) (Ralstonia metallidurans).